A 595-amino-acid polypeptide reads, in one-letter code: Apolipoprotein N-acyltransferase 2 (595 aa).

5 consecutive transmembrane segments (helical) span residues 30-50 (FLAF…FGFF), 63-83 (LFFH…HWII), 95-115 (VVAI…FPIF), 167-187 (AEIT…YTLF), and 210-230 (FITL…FLFK). Positions 241–555 (LNVLIVQPDA…AEALSETIDV (315 aa)) constitute a CN hydrolase domain. The active-site Proton acceptor is Glu-293. Lys-372 is a catalytic residue. Cys-463 functions as the Nucleophile in the catalytic mechanism. The chain crosses the membrane as a helical span at residues 569-589 (LIPWLMLFLTGIYYLNLLIGI).

This sequence belongs to the CN hydrolase family. Apolipoprotein N-acyltransferase subfamily.

Its subcellular location is the cell inner membrane. The enzyme catalyses N-terminal S-1,2-diacyl-sn-glyceryl-L-cysteinyl-[lipoprotein] + a glycerophospholipid = N-acyl-S-1,2-diacyl-sn-glyceryl-L-cysteinyl-[lipoprotein] + a 2-acyl-sn-glycero-3-phospholipid + H(+). It participates in protein modification; lipoprotein biosynthesis (N-acyl transfer). Catalyzes the phospholipid dependent N-acylation of the N-terminal cysteine of apolipoprotein, the last step in lipoprotein maturation. This is Apolipoprotein N-acyltransferase 2 from Leptospira interrogans serogroup Icterohaemorrhagiae serovar copenhageni (strain Fiocruz L1-130).